Consider the following 121-residue polypeptide: UPF0295 protein OB0906 (121 aa).

A run of 2 helical transmembrane segments spans residues 14–34 (IRTF…GGIL) and 43–63 (VIFF…YVWI).

Belongs to the UPF0295 family.

It is found in the cell membrane. The sequence is that of UPF0295 protein OB0906 from Oceanobacillus iheyensis (strain DSM 14371 / CIP 107618 / JCM 11309 / KCTC 3954 / HTE831).